The following is a 1153-amino-acid chain: Bifunctional dioxygenase (DOX)-epoxy alcohol synthase (EAS) (1153 aa).

Over residues 46–56 (SSKESPSRKSS) the composition is skewed to low complexity. The disordered stretch occupies residues 46–113 (SSKESPSRKS…TQHGDGTYPT (68 aa)). A compositionally biased stretch (polar residues) spans 57-74 (TIGQSTRNGSCQADTQKG). Over residues 81–98 (EKPKPVKENPMKKLKEMS) the composition is skewed to basic and acidic residues. The tract at residues 177 to 525 (TDSLINELWE…DGKFDDDDLV (349 aa)) is fatty acid alpha-dioxygenase. Histidine 276 is a heme b binding site. The active site involves tyrosine 454. Histidine 457 is a heme b binding site. Residues 732-1153 (RVNITSYGGA…VTMRVMWDDE (422 aa)) are epoxy alcohol synthase. Position 1086 (cysteine 1086) interacts with heme.

It in the N-terminal section; belongs to the peroxidase family. The protein in the C-terminal section; belongs to the cytochrome P450 family. In terms of assembly, homotetramer. Heme b is required as a cofactor. The cofactor is heme.

It catalyses the reaction (9Z)-octadecenoate + O2 = (8R)-hydroperoxy-(9Z)-octadecenoate. The catalysed reaction is (9Z)-octadecenoate + O2 = 10-hydroperoxy-(8E)-octadecenoate. The enzyme catalyses (9Z,12Z)-octadecadienoate + O2 = (8E,10R,12Z)-10-hydroperoxyoctadeca-8,12-dienoate. It carries out the reaction (9Z,12Z,15Z)-octadecatrienoate + O2 = (10R)-hydroperoxy-(8E,12Z,15Z)-octadecatrienoate. It catalyses the reaction (9Z,12Z,15Z)-octadecatrienoate + O2 = (8R)-hydroperoxy-(9Z,12Z,15Z)-octadecatrienoate. The catalysed reaction is (11Z,14Z)-eicosadienoate + O2 = 12-hydroperoxy-(10E,14Z)-eicosadienoate. The enzyme catalyses (11Z,14Z,17Z)-eicosatrienoate + O2 = 12-hydroperoxy-(10E,14Z,17Z)-eicosatrienoate. It carries out the reaction (12R,13S)-epoxy-(9Z)-octadecenoate + O2 = (12R,13S)-epoxy-(10R)-hydroperoxy-(8E)-octadecenoate. It catalyses the reaction (8E,10R,12Z)-10-hydroperoxyoctadeca-8,12-dienoate = (12S,13R)-epoxy-(10R)-hydroxy-(8E)-octadecenoate. The catalysed reaction is (10R)-hydroperoxy-(8E,12Z,15Z)-octadecatrienoate = 12,13-epoxy-(10R)-hydroxy-(8E,15Z)-octadecadienoate. The enzyme catalyses 12-hydroperoxy-(10E,14Z)-eicosadienoate = 10,11-epoxy-12-hydroxy-(14Z)-eicosenoate. It carries out the reaction 12-hydroperoxy-(10E,14Z,17Z)-eicosatrienoate = 14,15-epoxy-12-hydroxy-(10E,17Z)-eicosadienoate. It catalyses the reaction (13R)-hydroperoxy-(9Z,11E)-octadecadienoate = (12R,13R)-epoxy-(11S)-hydroxy-(9Z)-octadecenoate. The catalysed reaction is (13S)-hydroperoxy-(9Z,11E)-octadecadienoate = (12R,13R)-epoxy-(11S)-hydroxy-(9Z)-octadecenoate. The enzyme catalyses 12-hydroperoxy-(10E,14Z)-eicosadienoate = 14,15-epoxy-12-hydroxy-(10E)-eicosenoate. It carries out the reaction 12-hydroperoxy-(10E,14Z,17Z)-eicosatrienoate = 10,11-epoxy-12-hydroxy-(14Z,17Z)-eicosadienoate. Functionally, bifunctional dioxygenase (DOX)-epoxy alcohol synthase (EAS) that converts linoleic acid (18:2n-6) sequentially to 10(R)-hydroperoxy-8(E),12(Z)-octadecadienoic acid (10R-HPODE) and 10R-HPODE further to 12 S(13R)-epoxy-10(R)-hydroxy-8(E)-octadecenoic acid as the end product. Oxygenation at C-10 occurs by retention of the pro-R hydrogen of C-8 of 18:2n-6, suggesting antarafacial hydrogen abstraction and oxygenation. The epoxy alcohol is formed from 10R-HPODE, likely by heterolytic cleavage of the dioxygen bond and subsequent intramolecular epoxidation of the 12(Z) double bond. The DOX domain is also able to oxygenate position C-8 of linoleic acid to produce 8(R)-hydroperoxy-8(E),12(Z)-octadecadienoic acid (8R-HPODE). Moreover, the DOX domain can oxygenate alpha-linolenic acid (18:3n-3) at C-8 or C-10 to produce respectively 8HOTrE and 10HOTrE, oleic acid (18:1n-9) at C-8 or C-10 to produce respectively 8-H(P)OME and 10-H(P)OME (with 8R stereoisomer to over 95%), eicosadienoic acid (20:2n-6) at C-10 or C-12 to produce respectively 10(11)-epoxy-12-hydroxy-14(Z)-eicosenoic acid and 14(15)-epoxy-12-hydroxy-10(E)-eicosenoic acid, as well as eicosatrienoic acid (20:3n-3) at C-10 or C-12 to produce respectively 10(11)-epoxy-12-hydroxy-14(Z),17(Z)-eicosadienoic acid and 14(15)-epoxy-12-hydroxy-14(Z),17(Z)-eicosadienoic acid. On the other side, the enzyme EAS domain can also catalyze the conversion of 10HOTrE into 12(13)-epoxy-10(R)-hydroxy-8(E),15(Z)-octadecadienoic acid, 13-R-HPODE into the stereoisomers of 12(13)-epoxy-11-hydroxy-9(Z)-octadecenoic acids (erythro/threo, 1:4), as well as 13S-HPODE into the stereoisomers of 12(13)-epoxy-11-hydroxy-9(Z)-octadecenoic acids (erythro/threo, 1:4) (EAS activity). Gamma-linolenic acid (18:3n-6) is not a substrate. The polypeptide is Bifunctional dioxygenase (DOX)-epoxy alcohol synthase (EAS) (Pyricularia oryzae (strain 70-15 / ATCC MYA-4617 / FGSC 8958) (Rice blast fungus)).